Consider the following 197-residue polypeptide: Nucleoid occlusion factor SlmA (197 aa).

In terms of domain architecture, HTH tetR-type spans 7-67 (ISRREHILQC…GLIEFIEDSL (61 aa)). The H-T-H motif DNA-binding region spans 30–49 (TTAKLAAEVGVSEAALYRHF).

It belongs to the nucleoid occlusion factor SlmA family. Homodimer. Interacts with FtsZ.

The protein resides in the cytoplasm. It is found in the nucleoid. In terms of biological role, required for nucleoid occlusion (NO) phenomenon, which prevents Z-ring formation and cell division over the nucleoid. Acts as a DNA-associated cell division inhibitor that binds simultaneously chromosomal DNA and FtsZ, and disrupts the assembly of FtsZ polymers. SlmA-DNA-binding sequences (SBS) are dispersed on non-Ter regions of the chromosome, preventing FtsZ polymerization at these regions. The chain is Nucleoid occlusion factor SlmA from Shewanella amazonensis (strain ATCC BAA-1098 / SB2B).